Consider the following 373-residue polypeptide: Queuine tRNA-ribosyltransferase (373 aa).

The active-site Proton acceptor is the Asp-90. Residues 90–94 (DSGGF), Asp-144, Gln-193, and Gly-220 each bind substrate. An RNA binding region spans residues 251–257 (GVGTPED). The active-site Nucleophile is the Asp-270. The tract at residues 275-279 (TRNAR) is RNA binding; important for wobble base 34 recognition. Zn(2+) contacts are provided by Cys-308, Cys-310, Cys-313, and His-339.

The protein belongs to the queuine tRNA-ribosyltransferase family. In terms of assembly, homodimer. Within each dimer, one monomer is responsible for RNA recognition and catalysis, while the other monomer binds to the replacement base PreQ1. Zn(2+) serves as cofactor.

The catalysed reaction is 7-aminomethyl-7-carbaguanine + guanosine(34) in tRNA = 7-aminomethyl-7-carbaguanosine(34) in tRNA + guanine. It functions in the pathway tRNA modification; tRNA-queuosine biosynthesis. Its function is as follows. Catalyzes the base-exchange of a guanine (G) residue with the queuine precursor 7-aminomethyl-7-deazaguanine (PreQ1) at position 34 (anticodon wobble position) in tRNAs with GU(N) anticodons (tRNA-Asp, -Asn, -His and -Tyr). Catalysis occurs through a double-displacement mechanism. The nucleophile active site attacks the C1' of nucleotide 34 to detach the guanine base from the RNA, forming a covalent enzyme-RNA intermediate. The proton acceptor active site deprotonates the incoming PreQ1, allowing a nucleophilic attack on the C1' of the ribose to form the product. After dissociation, two additional enzymatic reactions on the tRNA convert PreQ1 to queuine (Q), resulting in the hypermodified nucleoside queuosine (7-(((4,5-cis-dihydroxy-2-cyclopenten-1-yl)amino)methyl)-7-deazaguanosine). The sequence is that of Queuine tRNA-ribosyltransferase from Campylobacter jejuni subsp. jejuni serotype O:23/36 (strain 81-176).